Here is a 551-residue protein sequence, read N- to C-terminus: Cleavage and polyadenylation specificity factor subunit 6 (551 aa).

Residues Met1–Gly213 are necessary for interaction with NXF1. An RRM domain is found at Ile81 to Lys161. A necessary for interaction with NUDT21/CPSF5 region spans residues Ile81 to Lys161. Positions Ile81 to Lys161 are necessary for nuclear paraspeckles localization. Phosphothreonine is present on Thr157. Residues Met169 to Met180 show a composition bias toward polar residues. Disordered regions lie at residues Met169 to Glu411 and Leu477 to Arg551. Residues Arg202–Arg206 carry the GAR motif. Low complexity predominate over residues Phe207–Gly219. Pro residues-rich tracts occupy residues Pro220–Gly265, Gly285–Thr366, and Gly377–Pro388. Positions Pro389–Thr404 are enriched in basic and acidic residues. 2 positions are modified to phosphothreonine: Thr404 and Thr407. The interval Thr404–Arg551 is sufficient for nuclear speckle localization. The necessary for RNA-binding stretch occupies residues Ala405 to Arg551. The tract at residues Glu481 to Arg551 is necessary for interaction with SRSF3, SRSF7 and TRA2B/SFRS10. A compositionally biased stretch (basic and acidic residues) spans Ser489–Arg503. Residues Arg490 to Arg551 are arg/Ser-rich domain. Ser494, Ser500, Ser511, Ser513, and Ser525 each carry phosphoserine. The span at Glu504–Arg514 shows a compositional bias: basic residues. A sufficient for nuclear targeting region spans residues Lys510–Arg551. Positions Asp515–Arg551 are enriched in basic and acidic residues.

It belongs to the RRM CPSF6/7 family. In terms of assembly, component of the cleavage factor Im (CFIm) complex which is a heterotetramer composed of two subunits of NUDT21/CPSF5 and two subunits of CPSF6 or CPSF7 or a heterodimer of CPSF6 and CPSF7. The cleavage factor Im (CFIm) complex associates with the CPSF and CSTF complexes to promote the assembly of the core mRNA 3'-processing machinery. Associates with the exon junction complex (EJC). Associates with the 80S ribosome particle. Interacts (via the RRM domain) with NUDT21/CPSF5; this interaction is direct and enhances binding to RNA. Interacts (via Arg/Ser-rich domain) with FIP1L1 (preferentially via unphosphorylated form and Arg/Glu/Asp-rich domain); this interaction mediates, at least in part, the interaction between the CFIm and CPSF complexes and may be inhibited by CPSF6 hyper-phosphorylation. Interacts (via N-terminus) with NXF1; this interaction is direct. Interacts with SRSF3. Interacts with SRSF7. Interacts with SNRNP70. Interacts with TRA2B/SFRS10. Interacts with UPF1. Interacts with UPF3B. Interacts with VIRMA. Interacts (via Arg/Ser-rich domain) with TNPO3; promoting nuclear import of CPSF6 independently of its phosphorylation status. Interacts with YTHDC1. In terms of processing, phosphorylated. Phosphorylated in the Arg/Ser-rich domain by SRPK1, in vitro. Post-translationally, symmetrically dimethylated on arginine residues in the GAR motif by PRMT5 in a WDR77- and CLNS1A-dependent manner. Asymmetrically dimethylated on arginine residues in the GAR motif by PRMT1.

The protein localises to the nucleus. It localises to the nucleoplasm. The protein resides in the nucleus speckle. It is found in the cytoplasm. Component of the cleavage factor Im (CFIm) complex that functions as an activator of the pre-mRNA 3'-end cleavage and polyadenylation processing required for the maturation of pre-mRNA into functional mRNAs. CFIm contributes to the recruitment of multiprotein complexes on specific sequences on the pre-mRNA 3'-end, so called cleavage and polyadenylation signals (pA signals). Most pre-mRNAs contain multiple pA signals, resulting in alternative cleavage and polyadenylation (APA) producing mRNAs with variable 3'-end formation. The CFIm complex acts as a key regulator of cleavage and polyadenylation site choice during APA through its binding to 5'-UGUA-3' elements localized in the 3'-untranslated region (UTR) for a huge number of pre-mRNAs. CPSF6 enhances NUDT21/CPSF5 binding to 5'-UGUA-3' elements localized upstream of pA signals and promotes RNA looping, and hence activates directly the mRNA 3'-processing machinery. Plays a role in mRNA export. The polypeptide is Cleavage and polyadenylation specificity factor subunit 6 (Bos taurus (Bovine)).